A 104-amino-acid polypeptide reads, in one-letter code: Large ribosomal subunit protein uL24 (104 aa).

This sequence belongs to the universal ribosomal protein uL24 family. As to quaternary structure, part of the 50S ribosomal subunit.

Its function is as follows. One of two assembly initiator proteins, it binds directly to the 5'-end of the 23S rRNA, where it nucleates assembly of the 50S subunit. One of the proteins that surrounds the polypeptide exit tunnel on the outside of the subunit. The polypeptide is Large ribosomal subunit protein uL24 (Pectobacterium carotovorum subsp. carotovorum (strain PC1)).